The following is a 148-amino-acid chain: MKALIILGLVLLSVTVQGKIFERCELARTLKKLGLDGYKGVSLANWVCLAKWESGYNTEATNYNPGDESTDYGIFQINSRYWCNNGKTPGAVDACHISCSALLQNNIADAVACAKRVVSDPQGVRAWVAWRNHCQNKDVSQYVKGCGV.

A signal peptide spans 1 to 18 (MKALIILGLVLLSVTVQG). Residues 19–148 (KIFERCELAR…VSQYVKGCGV (130 aa)) form the C-type lysozyme domain. Intrachain disulfides connect C24–C146, C48–C134, C83–C99, and C95–C113. Catalysis depends on residues E53 and D71.

This sequence belongs to the glycosyl hydrolase 22 family. As to quaternary structure, monomer.

It localises to the secreted. It carries out the reaction Hydrolysis of (1-&gt;4)-beta-linkages between N-acetylmuramic acid and N-acetyl-D-glucosamine residues in a peptidoglycan and between N-acetyl-D-glucosamine residues in chitodextrins.. Its function is as follows. Lysozymes have primarily a bacteriolytic function; those in tissues and body fluids are associated with the monocyte-macrophage system and enhance the activity of immunoagents. This chain is Lysozyme C (LYZ), found in Pygathrix nemaeus (Red-shanked douc langur).